Reading from the N-terminus, the 420-residue chain is Phosphoglycerate kinase (420 aa).

Residues Val-26, Asp-27, Tyr-28, Asn-29, Gln-42, Arg-43, Ser-66, His-67, Gly-69, Arg-70, Leu-125, Arg-126, His-173, and Arg-174 each coordinate (2R)-3-phosphoglycerate. Tyr-199 carries the post-translational modification Phosphotyrosine. Ser-206 carries the phosphoserine modification. The tract at residues 209–228 (KPFLAILGGAKVSDKIKLIE) is calmodulin binding. Gly-217 serves as a coordination point for ADP. Residue Gly-217 coordinates CDP. AMP-binding residues include Ala-218 and Lys-219. Residue Ala-218 coordinates ATP. Ala-218 provides a ligand contact to Mg(2+). Asp-222 is a CDP binding site. Asp-222 provides a ligand contact to Mg(2+). Lys-223 contacts AMP. Lys-223 contacts ATP. Gly-241 lines the ADP pocket. Residue Gly-241 coordinates CDP. Residues Gly-242 and Gly-316 each contribute to the AMP site. Residues Gly-242 and Gly-316 each coordinate ATP. CDP-binding residues include Gly-341 and Phe-346. Phe-346 contacts ADP. Glu-347 lines the AMP pocket. Glu-347, Asp-378, and Thr-379 together coordinate ATP. Asp-378 is a Mg(2+) binding site. A Phosphoserine modification is found at Ser-393.

Belongs to the phosphoglycerate kinase family. In terms of assembly, monomer. Interacts with calmodulin in the presence of Ca(2+). Mg(2+) is required as a cofactor.

It is found in the cytoplasm. It carries out the reaction (2R)-3-phosphoglycerate + ATP = (2R)-3-phospho-glyceroyl phosphate + ADP. It participates in carbohydrate degradation; glycolysis; pyruvate from D-glyceraldehyde 3-phosphate: step 2/5. The protein is Phosphoglycerate kinase of Dictyostelium discoideum (Social amoeba).